The primary structure comprises 621 residues: Methionine--tRNA ligase (621 aa).

The 'HIGH' region signature appears at 11-21 (PYANGPRHIGH). The Zn(2+) site is built by C143, C146, C156, and C159. Residues 347–351 (KFSSS) carry the 'KMSKS' region motif. Residue S350 coordinates ATP.

It belongs to the class-I aminoacyl-tRNA synthetase family. MetG type 1 subfamily. As to quaternary structure, monomer. It depends on Zn(2+) as a cofactor.

The protein resides in the cytoplasm. It catalyses the reaction tRNA(Met) + L-methionine + ATP = L-methionyl-tRNA(Met) + AMP + diphosphate. In terms of biological role, is required not only for elongation of protein synthesis but also for the initiation of all mRNA translation through initiator tRNA(fMet) aminoacylation. The chain is Methionine--tRNA ligase from Bifidobacterium longum (strain NCC 2705).